The sequence spans 536 residues: Caspase recruitment domain-containing protein 9 (536 aa).

Serine 2 is modified (phosphoserine). 3 residues coordinate Zn(2+): aspartate 3, cysteine 10, and histidine 73. Positions 6 to 98 constitute a CARD domain; the sequence is NDDECWSVLE…QLYKKVTGKE (93 aa). The tract at residues 99–116 is linker; sequence PARVFSMIIDASGESGLT. 2 coiled-coil regions span residues 117-277 and 332-419; these read QLLM…DRSS and LRKD…QQLE. Lysine 125 participates in a covalent cross-link: Glycyl lysine isopeptide (Lys-Gly) (interchain with G-Cter in ubiquitin). Threonine 231 is subject to Phosphothreonine. At serine 277 the chain carries Phosphoserine. Residues serine 424, serine 425, serine 431, serine 450, serine 460, serine 483, and serine 498 each carry the phosphoserine modification. The disordered stretch occupies residues 427–536; sequence LEDGSPRRSQ…GSDNTDTEGS (110 aa). Basic and acidic residues predominate over residues 487 to 502; it reads PPEKERRRLKESFENY. The segment covering 503 to 513 has biased composition (basic residues); sequence RRKRALRKMQK. Phosphothreonine; by CK2 is present on residues threonine 531 and threonine 533.

As to quaternary structure, monomer. Homodimer; homodimerization is mediated by the CARD domain which forms an extensive interaction with the adjacent linker and coiled-coil regions; leads to an autoinhibited state. Homomultimer; polymerizes following activation, forming a nucleating helical template that seeds BCL10-filament formation via a CARD-CARD interaction. Interacts (via CARD domain) with BCL10 (via CARD domain); interaction takes place following CARD9 activation and polymerization, leading to the formation of a filamentous CBM complex assembly. Component of a CBM complex (CARD9-BCL10, MALT1), composed of CARD9, BCL10 and MALT1. Interacts with RASGRF1. Interacts with NOD2 (via NACHT domain); interaction is direct. Interacts with RIPK2. Interacts with VHL; without leading to protein degradation. Post-translationally, phosphorylated at Thr-231 by PRKCD downstream of C-type lectin receptors activation: phosphorylation promotes interaction with BCL10, followed by activation of NF-kappa-B and MAP kinase p38 pathways. Phosphorylated at Thr-531 and Thr-533 by CK2 following interaction with VHL, leading to inhibit the ability to activate NF-kappa-B. In terms of processing, ubiquitinated at Lys-125 via 'Lys-27'-linked ubiquitin by TRIM62 downstream of C-type lectin receptors activation; leading to CARD9 activation, followed by activation of NF-kappa-B and MAP kinase p38 pathways. Deubiquitinated at Lys-125 by USP15, inhibiting CARD9. In terms of tissue distribution, expression is restricted to several populations of phagocytes, such as macrophages, monocytes, and dendritic cells. Highly expressed in spleen. Also detected in liver, placenta, lung, peripheral blood leukocytes and in brain.

The protein localises to the cytoplasm. Its activity is regulated as follows. Maintained in an autoinhibited state via homodimerization in which the CARD domain forms an extensive interaction with the adjacent linker and coiled-coil regions. Activation downstream of C-type lectin receptors, by phosphorylation by PRKCD and/or ubiquitination by TRIM62, triggers disruption of the CARD domain-coiled coil interface, CARD9 homooligomerization and BCL10 recruitment, followed by activation of NF-kappa-B and MAP kinase p38 pathways. Zinc-binding inhibits activation by stabilizing the CARD ground-state conformation and restricting its capacity to form BCL10-nucleating filaments. Adapter protein that plays a key role in innate immune response against fungi by forming signaling complexes downstream of C-type lectin receptors. CARD9-mediated signals are essential for antifungal immunity against a subset of fungi from the phylum Ascomycota. Transduces signals in myeloid cells downstream of C-type lectin receptors CLEC7A (dectin-1), CLEC6A (dectin-2) and CLEC4E (Mincle), which detect pathogen-associated molecular pattern metabolites (PAMPs), such as fungal carbohydrates, and trigger CARD9 activation. Upon activation, CARD9 homooligomerizes to form a nucleating helical template that recruits BCL10 via CARD-CARD interaction, thereby promoting polymerization of BCL10 and subsequent recruitment of MALT1: this leads to activation of NF-kappa-B and MAP kinase p38 (MAPK11, MAPK12, MAPK13 and/or MAPK14) pathways which stimulate expression of genes encoding pro-inflammatory cytokines and chemokines. CARD9 signaling in antigen-presenting cells links innate sensing of fungi to the activation of adaptive immunity and provides a cytokine milieu that induces the development and subsequent of interleukin 17-producing T helper (Th17) cells. Also involved in activation of myeloid cells via classical ITAM-associated receptors and TLR: required for TLR-mediated activation of MAPK, while it is not required for TLR-induced activation of NF-kappa-B. CARD9 can also be engaged independently of BCL10: forms a complex with RASGRF1 downstream of C-type lectin receptors, which recruits and activates HRAS, leading to ERK activation and the production of cytokines. Acts as an important regulator of the intestinal commensal fungi (mycobiota) component of the gut microbiota. Plays an essential role in antifungal immunity against dissemination of gut fungi: acts by promoting induction of antifungal IgG antibodies response in CX3CR1(+) macrophages to confer protection against disseminated C.albicans or C.auris infection. Also mediates immunity against other pathogens, such as certain bacteria, viruses and parasites; CARD9 signaling is however redundant with other innate immune responses. In response to L.monocytogenes infection, required for the production of inflammatory cytokines activated by intracellular peptidoglycan: acts by connecting NOD2 recognition of peptidoglycan to downstream activation of MAP kinases (MAPK) without activating NF-kappa-B. This Homo sapiens (Human) protein is Caspase recruitment domain-containing protein 9.